Here is a 279-residue protein sequence, read N- to C-terminus: Undecaprenyl-diphosphatase (279 aa).

A run of 8 helical transmembrane segments spans residues 2–22, 44–64, 85–105, 113–133, 163–183, 188–208, 225–245, and 255–275; these read LFIELLKAIFFGVIEGVTEWL, AFMEMFNIVIQLGAIIAVIVI, WQLWLKVAIACIPSIIIAVPL, FNHMLPIAIALIVYGIAFLWI, VLSIIPGTSRSGATILGAIIL, TVAADFTFFLAIPTMFGYSGL, LLVLLVASLTAFAVSLYVIKL, and FTVFGRYRIVLGSLLIVYSVF.

It belongs to the UppP family.

It is found in the cell membrane. It catalyses the reaction di-trans,octa-cis-undecaprenyl diphosphate + H2O = di-trans,octa-cis-undecaprenyl phosphate + phosphate + H(+). Functionally, catalyzes the dephosphorylation of undecaprenyl diphosphate (UPP). Confers resistance to bacitracin. In Streptococcus equi subsp. equi (strain 4047), this protein is Undecaprenyl-diphosphatase.